We begin with the raw amino-acid sequence, 177 residues long: Large ribosomal subunit protein uL6 (177 aa).

The protein belongs to the universal ribosomal protein uL6 family. Part of the 50S ribosomal subunit.

Its function is as follows. This protein binds to the 23S rRNA, and is important in its secondary structure. It is located near the subunit interface in the base of the L7/L12 stalk, and near the tRNA binding site of the peptidyltransferase center. The chain is Large ribosomal subunit protein uL6 from Sodalis glossinidius (strain morsitans).